A 651-amino-acid polypeptide reads, in one-letter code: Choline transporter-like protein 1 (651 aa).

At 1 to 25 (MGCCGSTQNSKRDWRPLEEHSCTDI) the chain is on the cytoplasmic side. Residues 26–46 (PWLLLFILFCVGMGFICGFSI) form a helical membrane-spanning segment. The Extracellular portion of the chain corresponds to 47–208 (ATGAASRLVF…RLISGVMTSK (162 aa)). 2 N-linked (GlcNAc...) asparagine glycosylation sites follow: N131 and N176. The helical transmembrane segment at 209-229 (EIIMGLCLLSLVLSMILMVII) threads the bilayer. Residues 230-234 (RYISR) are Cytoplasmic-facing. The chain crosses the membrane as a helical span at residues 235–255 (VLVWIITILVVLGSLGGTGVL). The Extracellular portion of the chain corresponds to 256–284 (WWLYADNKKSLNENLPPDQLQVSKDNLQA). The chain crosses the membrane as a helical span at residues 285 to 305 (LLVYAIAATVFTVILLLMMLI). The Cytoplasmic segment spans residues 306–311 (MRKRVA). Residues 312 to 332 (LTIALFNVAGKVFIHLPLLVF) traverse the membrane as a helical segment. Over 333–334 (QP) the chain is Extracellular. The chain crosses the membrane as a helical span at residues 335–355 (FWTFFALLLFWVYWVMVLLFL). At 356–376 (GTAGDPFTNEQGFVEFRINGP) the chain is on the cytoplasmic side. The helical transmembrane segment at 377–397 (LQYMWWYHLVGLIWISEFILA) threads the bilayer. The Extracellular segment spans residues 398–438 (CQQMTIAGAVVTYYFTRNKNDLPFTPILASVNRLIRYHLGT). The chain crosses the membrane as a helical span at residues 439–459 (VAKGAFIITLVKIPRMILMYI). The Cytoplasmic segment spans residues 460 to 533 (HSQLKGKENA…RVAAINTVGD (74 aa)). The chain crosses the membrane as a helical span at residues 534-554 (FMLFLGKILIVSCTGLAGIML). The Extracellular segment spans residues 555-562 (LNYQRDYT). Residues 563–583 (VWVLPLIIVCLFAFLVAHCFL) form a helical membrane-spanning segment. The Cytoplasmic portion of the chain corresponds to 584–651 (SIYEMVVDVL…KPMASGTSTA (68 aa)). The interval 629–651 (LKEPGSTAEGRELKPMASGTSTA) is disordered.

Belongs to the CTL (choline transporter-like) family.

The protein resides in the cell membrane. Its subcellular location is the mitochondrion outer membrane. It catalyses the reaction choline(out) + n H(+)(in) = choline(in) + n H(+)(out). It carries out the reaction ethanolamine(out) + n H(+)(in) = ethanolamine(in) + n H(+)(out). In terms of biological role, choline/H+ antiporter. Also acts as a high-affinity ethanolamine/H+ antiporter, regulating the supply of extracellular ethanolamine (Etn) for the CDP-Etn pathway, redistribute intracellular Etn and balance the CDP-Cho and CDP-Etn arms of the Kennedy pathway. Involved in membrane synthesis and myelin production. This Xenopus laevis (African clawed frog) protein is Choline transporter-like protein 1 (slc44a1).